Consider the following 84-residue polypeptide: MRIDKFLQSVGLVKRRVLATDMCNVGAVWLNGSCAKPSKEVKTGDVISLHYLKGIEEYTILQIPTLKNVPRKDTHLYIAPKTKE.

Residues 1-64 (MRIDKFLQSV…IEEYTILQIP (64 aa)) form the S4 RNA-binding domain.

It belongs to the RqcP family. Associates with stalled 50S ribosomal subunits. Binds to RqcH, 23S rRNA and the P-site tRNA. Does not require RqcH for association with 50S subunits.

Functionally, key component of the ribosome quality control system (RQC), a ribosome-associated complex that mediates the extraction of incompletely synthesized nascent chains from stalled ribosomes and their subsequent degradation. RqcH recruits Ala-charged tRNA, and with RqcP directs the elongation of stalled nascent chains on 50S ribosomal subunits, leading to non-templated C-terminal alanine extensions (Ala tail). The Ala tail promotes nascent chain degradation. RqcP is associated with the translocation-like movement of the peptidyl-tRNA from the A-site into the P-site. The sequence is that of RQC P-site tRNA stabilizing factor from Helicobacter pylori (strain J99 / ATCC 700824) (Campylobacter pylori J99).